The following is a 106-amino-acid chain: UPF0145 protein CLL_A2504 (106 aa).

The protein belongs to the UPF0145 family.

This Clostridium botulinum (strain Eklund 17B / Type B) protein is UPF0145 protein CLL_A2504.